The sequence spans 469 residues: Adenosylhomocysteinase (469 aa).

Residues T60, D135, and E195 each coordinate substrate. Residue 196–198 (TTT) coordinates NAD(+). The substrate site is built by K225 and D229. NAD(+) contacts are provided by residues N230, 259-264 (GYGDVG), E282, N317, 338-340 (IGH), and N383.

It belongs to the adenosylhomocysteinase family. It depends on NAD(+) as a cofactor.

The protein localises to the cytoplasm. It catalyses the reaction S-adenosyl-L-homocysteine + H2O = L-homocysteine + adenosine. Its pathway is amino-acid biosynthesis; L-homocysteine biosynthesis; L-homocysteine from S-adenosyl-L-homocysteine: step 1/1. Its function is as follows. May play a key role in the regulation of the intracellular concentration of adenosylhomocysteine. This is Adenosylhomocysteinase from Maricaulis maris (strain MCS10) (Caulobacter maris).